The chain runs to 439 residues: Methylenetetrahydrofolate--tRNA-(uracil-5-)-methyltransferase TrmFO (439 aa).

Position 8 to 13 (8 to 13 (GGGLAG)) interacts with FAD.

This sequence belongs to the MnmG family. TrmFO subfamily. The cofactor is FAD.

It is found in the cytoplasm. It carries out the reaction uridine(54) in tRNA + (6R)-5,10-methylene-5,6,7,8-tetrahydrofolate + NADH + H(+) = 5-methyluridine(54) in tRNA + (6S)-5,6,7,8-tetrahydrofolate + NAD(+). The catalysed reaction is uridine(54) in tRNA + (6R)-5,10-methylene-5,6,7,8-tetrahydrofolate + NADPH + H(+) = 5-methyluridine(54) in tRNA + (6S)-5,6,7,8-tetrahydrofolate + NADP(+). In terms of biological role, catalyzes the folate-dependent formation of 5-methyl-uridine at position 54 (M-5-U54) in all tRNAs. This is Methylenetetrahydrofolate--tRNA-(uracil-5-)-methyltransferase TrmFO from Dictyoglomus thermophilum (strain ATCC 35947 / DSM 3960 / H-6-12).